Consider the following 160-residue polypeptide: uncharacterized protein (160 aa).

Residues Val-27–Trp-47 traverse the membrane as a helical segment.

Its subcellular location is the membrane. This is an uncharacterized protein from Homo sapiens (Human).